The following is a 430-amino-acid chain: Adenylosuccinate synthetase (430 aa).

GTP contacts are provided by residues 12–18 and 40–42; these read GDEGKGK and GHT. Aspartate 13 serves as the catalytic Proton acceptor. 2 residues coordinate Mg(2+): aspartate 13 and glycine 40. Residues 13–16, 38–41, threonine 128, arginine 142, glutamine 223, threonine 238, and arginine 302 contribute to the IMP site; these read DEGK and NAGH. Catalysis depends on histidine 41, which acts as the Proton donor. GTP is bound by residues 330–332 and 412–414; these read SID and SVG.

This sequence belongs to the adenylosuccinate synthetase family. Homodimer. The cofactor is Mg(2+).

Its subcellular location is the cytoplasm. The enzyme catalyses IMP + L-aspartate + GTP = N(6)-(1,2-dicarboxyethyl)-AMP + GDP + phosphate + 2 H(+). Its pathway is purine metabolism; AMP biosynthesis via de novo pathway; AMP from IMP: step 1/2. Functionally, plays an important role in the de novo pathway of purine nucleotide biosynthesis. Catalyzes the first committed step in the biosynthesis of AMP from IMP. This chain is Adenylosuccinate synthetase, found in Bacillus subtilis (strain 168).